A 311-amino-acid polypeptide reads, in one-letter code: MGQDRGFGFPTQRLCSLSSLALSHLGKQDLNLVSKTCGDTTDMFSTRGSYQVSTQVSQSYFDGYCGWVHGSSHLQQQFLPPQNQCMKQVPLQVDGVISKAEEQCSQKRFLVFDQSGDQTTLLLASDIRKSFETLKQHACPDMKEELQRSNKDLFVCHGMQGNSEPDLKEDSEELNALLYSEDESGYCSEEDEVTSADHSPSIVVSGREDQKTFLGSYGQPLNAKKRKILETSNESMRDAESSCGSCDNTRISFLKRSKLSSNKIGEEKIFETVSLLRSVVPGEELVDPILVIDRAIDYLKSLKMEAKNREA.

Residues 253-302 (FLKRSKLSSNKIGEEKIFETVSLLRSVVPGEELVDPILVIDRAIDYLKSL) form the bHLH domain.

Homodimer.

It is found in the nucleus. The sequence is that of Transcription factor bHLH145 (BHLH145) from Arabidopsis thaliana (Mouse-ear cress).